A 384-amino-acid chain; its full sequence is MALSPEPSSRFLVPATMGSAMPELPGAPNASLNSSLASPTEPNSLEDLVATGTIGVVLSAMGVVGMAGNVYTLTVMCRFLHTSASMYVYVINLALADLLYLLSIPFIVATYVTKRWHFGDVGCRVLFSLDFLTMHASIFTLTLMSRERYAAVVRPLDTVQRSKGYRKVLALGTWLLALLLALPMMLAIRLVRRGHKSLCLPAWGQRTHRAYLTLLFGTSIVGPGVVIGLLYVRLARAYWLSQRSSFTQTRRLPNPRVLYLILGIVLLFWACFLPFWLWQLLAQYRGAPPLAPRSARIVNYLTTCLTYGNSCVNPFLYTLLTKNYRDYRQRSLHSRGTSGPVGVRSFPQGHTRCQLGSGRSVTSSSQQATETIALSQAVPGSLCV.

Residues 1–54 lie on the Extracellular side of the membrane; sequence MALSPEPSSRFLVPATMGSAMPELPGAPNASLNSSLASPTEPNSLEDLVATGTI. 2 N-linked (GlcNAc...) asparagine glycosylation sites follow: Asn-29 and Asn-33. Residues 55-77 traverse the membrane as a helical segment; the sequence is GVVLSAMGVVGMAGNVYTLTVMC. The Cytoplasmic segment spans residues 78-87; it reads RFLHTSASMY. Residues 88–113 traverse the membrane as a helical segment; sequence VYVINLALADLLYLLSIPFIVATYVT. Topologically, residues 114 to 124 are extracellular; the sequence is KRWHFGDVGCR. Cys-123 and Cys-199 form a disulfide bridge. A helical membrane pass occupies residues 125–146; it reads VLFSLDFLTMHASIFTLTLMSR. Over 147 to 167 the chain is Cytoplasmic; the sequence is ERYAAVVRPLDTVQRSKGYRK. Residues 168 to 186 traverse the membrane as a helical segment; that stretch reads VLALGTWLLALLLALPMML. The Extracellular portion of the chain corresponds to 187–209; the sequence is AIRLVRRGHKSLCLPAWGQRTHR. A helical membrane pass occupies residues 210–232; that stretch reads AYLTLLFGTSIVGPGVVIGLLYV. Residues 233 to 259 are Cytoplasmic-facing; it reads RLARAYWLSQRSSFTQTRRLPNPRVLY. Residues 260-285 traverse the membrane as a helical segment; that stretch reads LILGIVLLFWACFLPFWLWQLLAQYR. Residues 286-299 lie on the Extracellular side of the membrane; the sequence is GAPPLAPRSARIVN. A helical membrane pass occupies residues 300–320; the sequence is YLTTCLTYGNSCVNPFLYTLL. At 321-384 the chain is on the cytoplasmic side; it reads TKNYRDYRQR…SQAVPGSLCV (64 aa).

This sequence belongs to the G-protein coupled receptor 1 family. In terms of tissue distribution, expressed in neural tissue, including sensory epithelia.

The protein resides in the cell membrane. In terms of biological role, high affinity receptor for urotensin-2 and urotensin-2B. The activity of this receptor is mediated by a G-protein that activate a phosphatidylinositol-calcium second messenger system. In Bos taurus (Bovine), this protein is Urotensin-2 receptor (UTS2R).